The chain runs to 78 residues: U7-lycotoxin-Ls1h (78 aa).

The first 22 residues, 1 to 22, serve as a signal peptide directing secretion; it reads MKLIIFTGLTLLLIVSLIDVEA. A propeptide spanning residues 23-26 is cleaved from the precursor; sequence QNEG.

It belongs to the neurotoxin 19 (CSTX) family. 07 (U7-Lctx) subfamily. In terms of processing, contains 4 disulfide bonds. Expressed by the venom gland.

It localises to the secreted. This is U7-lycotoxin-Ls1h from Lycosa singoriensis (Wolf spider).